A 565-amino-acid polypeptide reads, in one-letter code: Sulfite reductase [NADPH] hemoprotein beta-component (565 aa).

[4Fe-4S] cluster contacts are provided by cysteine 429, cysteine 435, cysteine 474, and cysteine 478. Cysteine 478 serves as a coordination point for siroheme.

This sequence belongs to the nitrite and sulfite reductase 4Fe-4S domain family. As to quaternary structure, alpha(8)-beta(8). The alpha component is a flavoprotein, the beta component is a hemoprotein. Siroheme is required as a cofactor. Requires [4Fe-4S] cluster as cofactor.

It carries out the reaction hydrogen sulfide + 3 NADP(+) + 3 H2O = sulfite + 3 NADPH + 4 H(+). It functions in the pathway sulfur metabolism; hydrogen sulfide biosynthesis; hydrogen sulfide from sulfite (NADPH route): step 1/1. Its function is as follows. Component of the sulfite reductase complex that catalyzes the 6-electron reduction of sulfite to sulfide. This is one of several activities required for the biosynthesis of L-cysteine from sulfate. The sequence is that of Sulfite reductase [NADPH] hemoprotein beta-component from Shewanella pealeana (strain ATCC 700345 / ANG-SQ1).